Reading from the N-terminus, the 385-residue chain is MSSDGEFTRTQIFGTVFEITNRYTDLNPVGMGAFGLVCSAVDKLTGQNVAVKKIMKPFSTSVLAKRTYRELKLLKHLKHENLITLDDIFLSPLEDIYFVNELQGTDLHRLLTSRPLEKQFIQYFTYQILRGLKYIHSAGVIHRDLKPSNILINENCDLKICDFGLARIQDPQMTGYVSTRYYRAPEIMLTWQKYDTEVDLWSVGCILAEMIEGKPLFPGKDHVHQFSIITELLGSPPPDVIDTICSENTLRFVQSLPHRDPIPFNERFAQCTHVEPEAIDLLAKMLIFDPKKRISAASALTHPYMEPYHDPTDEPICETKFDWSFNDADLPVDTWRVMMYSEILDFHQIGGVGEEAGQSVTQEEIAHIQQDGIQAPQQPQEQQVE.

The Protein kinase domain maps to 23–305; sequence YTDLNPVGMG…AASALTHPYM (283 aa). Residues 29–37 and Lys52 contribute to the ATP site; that span reads VGMGAFGLV. Asp144 acts as the Proton acceptor in catalysis. Thr174 carries the post-translational modification Phosphothreonine. The TXY signature appears at 174 to 176; sequence TGY. Tyr176 bears the Phosphotyrosine mark.

Belongs to the protein kinase superfamily. Ser/Thr protein kinase family. MAP kinase subfamily. HOG1 sub-subfamily. Mg(2+) is required as a cofactor. In terms of processing, dually phosphorylated on Thr-174 and Tyr-176, which activates the enzyme.

Its subcellular location is the cytoplasm. The protein resides in the nucleus. The enzyme catalyses L-seryl-[protein] + ATP = O-phospho-L-seryl-[protein] + ADP + H(+). It carries out the reaction L-threonyl-[protein] + ATP = O-phospho-L-threonyl-[protein] + ADP + H(+). With respect to regulation, activated by tyrosine and threonine phosphorylation. In terms of biological role, proline-directed serine/threonine-protein kinase involved in a signal transduction pathway that is activated by changes in the osmolarity of the extracellular environment. Controls osmotic regulation of transcription of target genes. The chain is Mitogen-activated protein kinase HOG1 (HOG1) from Scheffersomyces stipitis (strain ATCC 58785 / CBS 6054 / NBRC 10063 / NRRL Y-11545) (Yeast).